A 278-amino-acid chain; its full sequence is Toxin coregulated pilus biosynthesis protein D (278 aa).

Residues 30-50 (LLVAIIFLVLSILGGGAYLYY) form a helical membrane-spanning segment.

The protein localises to the cell membrane. In terms of biological role, involved in TCP pilus biogenesis. The polypeptide is Toxin coregulated pilus biosynthesis protein D (tcpD) (Vibrio cholerae serotype O1 (strain ATCC 39315 / El Tor Inaba N16961)).